The following is a 569-amino-acid chain: Lysine--tRNA ligase (569 aa).

Mg(2+) is bound by residues E414 and E421.

Belongs to the class-II aminoacyl-tRNA synthetase family. As to quaternary structure, homodimer. The cofactor is Mg(2+).

It localises to the cytoplasm. It catalyses the reaction tRNA(Lys) + L-lysine + ATP = L-lysyl-tRNA(Lys) + AMP + diphosphate. This chain is Lysine--tRNA ligase, found in Christiangramia forsetii (strain DSM 17595 / CGMCC 1.15422 / KT0803) (Gramella forsetii).